Here is a 241-residue protein sequence, read N- to C-terminus: Large ribosomal subunit protein uL2 (241 aa).

The segment at valine 201 to arginine 241 is disordered.

This sequence belongs to the universal ribosomal protein uL2 family. Part of the 50S ribosomal subunit. Forms a bridge to the 30S subunit in the 70S ribosome.

Functionally, one of the primary rRNA binding proteins. Required for association of the 30S and 50S subunits to form the 70S ribosome, for tRNA binding and peptide bond formation. It has been suggested to have peptidyltransferase activity; this is somewhat controversial. Makes several contacts with the 16S rRNA in the 70S ribosome. This Methanobrevibacter smithii (strain ATCC 35061 / DSM 861 / OCM 144 / PS) protein is Large ribosomal subunit protein uL2.